The sequence spans 381 residues: p55-v-Fos-transforming protein (381 aa).

The bZIP domain maps to 137–200 (EEKRRIRRER…EKLEFILAAH (64 aa)). The interval 139 to 159 (KRRIRRERNKMAAAKCRNRRR) is basic motif. Positions 165–193 (LQAETDQLEDKKSALQTEIANLLKEKEKL) are leucine-zipper.

It belongs to the bZIP family. Fos subfamily.

The protein localises to the host nucleus. This is p55-v-Fos-transforming protein (V-FOS) from Mus musculus (Mouse).